Reading from the N-terminus, the 740-residue chain is DNA ligase (740 aa).

The segment at 1–20 (MGPGLTLSGMTEQSSLFPAP) is disordered. Residues 56–60 (DAEYD), 105–106 (SI), and Glu142 contribute to the NAD(+) site. Lys144 (N6-AMP-lysine intermediate) is an active-site residue. The NAD(+) site is built by Arg165, Glu201, Lys322, and Lys346. Zn(2+)-binding residues include Cys471, Cys474, Cys489, and Cys495. One can recognise a BRCT domain in the interval 654-740 (AATLPLAGMT…RGAPPNAGGG (87 aa)).

Belongs to the NAD-dependent DNA ligase family. LigA subfamily. Requires Mg(2+) as cofactor. Mn(2+) serves as cofactor.

It catalyses the reaction NAD(+) + (deoxyribonucleotide)n-3'-hydroxyl + 5'-phospho-(deoxyribonucleotide)m = (deoxyribonucleotide)n+m + AMP + beta-nicotinamide D-nucleotide.. In terms of biological role, DNA ligase that catalyzes the formation of phosphodiester linkages between 5'-phosphoryl and 3'-hydroxyl groups in double-stranded DNA using NAD as a coenzyme and as the energy source for the reaction. It is essential for DNA replication and repair of damaged DNA. This is DNA ligase from Acidovorax ebreus (strain TPSY) (Diaphorobacter sp. (strain TPSY)).